Reading from the N-terminus, the 355-residue chain is DNA polymerase IV (355 aa).

The UmuC domain occupies 7–188; the sequence is IIHIDMDCFY…LPVRKLFGVG (182 aa). Mg(2+) is bound by residues aspartate 11 and aspartate 106. The active site involves glutamate 107.

Belongs to the DNA polymerase type-Y family. Monomer. It depends on Mg(2+) as a cofactor.

It localises to the cytoplasm. The catalysed reaction is DNA(n) + a 2'-deoxyribonucleoside 5'-triphosphate = DNA(n+1) + diphosphate. Poorly processive, error-prone DNA polymerase involved in untargeted mutagenesis. Copies undamaged DNA at stalled replication forks, which arise in vivo from mismatched or misaligned primer ends. These misaligned primers can be extended by PolIV. Exhibits no 3'-5' exonuclease (proofreading) activity. May be involved in translesional synthesis, in conjunction with the beta clamp from PolIII. The sequence is that of DNA polymerase IV from Legionella pneumophila (strain Lens).